Here is a 203-residue protein sequence, read N- to C-terminus: Small ribosomal subunit protein uS4 (203 aa).

Residues Gln93–Gln153 enclose the S4 RNA-binding domain.

It belongs to the universal ribosomal protein uS4 family. Part of the 30S ribosomal subunit. Contacts protein S5. The interaction surface between S4 and S5 is involved in control of translational fidelity.

One of the primary rRNA binding proteins, it binds directly to 16S rRNA where it nucleates assembly of the body of the 30S subunit. Functionally, with S5 and S12 plays an important role in translational accuracy. In Leuconostoc citreum (strain KM20), this protein is Small ribosomal subunit protein uS4.